Consider the following 124-residue polypeptide: Small ribosomal subunit protein uS12 (124 aa).

Residues 1 to 32 are disordered; the sequence is MPTIQQLVRKGREDKVVKTKTPALKGSPQRRG. Position 89 is a 3-methylthioaspartic acid (D89). The interval 105-124 is disordered; sequence QGVKNRKQARSRYGAKKEKS. Residues 108–118 are compositionally biased toward basic residues; that stretch reads KNRKQARSRYG.

The protein belongs to the universal ribosomal protein uS12 family. As to quaternary structure, part of the 30S ribosomal subunit. Contacts proteins S8 and S17. May interact with IF1 in the 30S initiation complex.

Functionally, with S4 and S5 plays an important role in translational accuracy. Its function is as follows. Interacts with and stabilizes bases of the 16S rRNA that are involved in tRNA selection in the A site and with the mRNA backbone. Located at the interface of the 30S and 50S subunits, it traverses the body of the 30S subunit contacting proteins on the other side and probably holding the rRNA structure together. The combined cluster of proteins S8, S12 and S17 appears to hold together the shoulder and platform of the 30S subunit. The protein is Small ribosomal subunit protein uS12 of Kineococcus radiotolerans (strain ATCC BAA-149 / DSM 14245 / SRS30216).